We begin with the raw amino-acid sequence, 562 residues long: Malate synthase (562 aa).

Catalysis depends on Arg177, which acts as the Proton acceptor. Asp463 functions as the Proton donor in the catalytic mechanism. Residues 560 to 562 (SRL) carry the Microbody targeting signal motif.

This sequence belongs to the malate synthase family.

It is found in the glyoxysome. It carries out the reaction glyoxylate + acetyl-CoA + H2O = (S)-malate + CoA + H(+). It participates in carbohydrate metabolism; glyoxylate cycle; (S)-malate from isocitrate: step 2/2. Functionally, does not seem to be essential for lipid utilization and gluconeogenesis in seedlings. The sequence is that of Malate synthase from Arabidopsis thaliana (Mouse-ear cress).